A 48-amino-acid chain; its full sequence is DNA gyrase inhibitor YacG (48 aa).

The Zn(2+) site is built by Cys-9, Cys-12, Cys-28, and Cys-32.

Belongs to the DNA gyrase inhibitor YacG family. In terms of assembly, interacts with GyrB. Requires Zn(2+) as cofactor.

In terms of biological role, inhibits all the catalytic activities of DNA gyrase by preventing its interaction with DNA. Acts by binding directly to the C-terminal domain of GyrB, which probably disrupts DNA binding by the gyrase. This chain is DNA gyrase inhibitor YacG, found in Wigglesworthia glossinidia brevipalpis.